The following is a 199-amino-acid chain: MRLTAKQITWLKVCLHLAGFLPLLWLFWAINHGGLSADPVKDIQHFTGRTALKFLLATLLVSPLARYAKQPLLIRTRRLLGLWCFVWATLHLTSYALLELGIHNLALLGSELISRPYLTLGIISWLVLLALTLTSTQFAQRKLGKRWQTLHNVVYLVAILAPIHYLWSVKILSPQPVIYATLALALLALRYRKFRQWWR.

A run of 4 helical transmembrane segments spans residues 10–30 (WLKV…FWAI), 82–102 (LWCF…ELGI), 116–136 (PYLT…LTST), and 153–173 (VVYL…KILS).

Belongs to the MsrQ family. In terms of assembly, heterodimer of a catalytic subunit (MsrP) and a heme-binding subunit (MsrQ). FMN serves as cofactor. The cofactor is heme b.

The protein resides in the cell inner membrane. Functionally, part of the MsrPQ system that repairs oxidized periplasmic proteins containing methionine sulfoxide residues (Met-O), using respiratory chain electrons. Thus protects these proteins from oxidative-stress damage caused by reactive species of oxygen and chlorine generated by the host defense mechanisms. MsrPQ is essential for the maintenance of envelope integrity under bleach stress, rescuing a wide series of structurally unrelated periplasmic proteins from methionine oxidation, including the primary periplasmic chaperone SurA and the lipoprotein Pal. MsrQ provides electrons for reduction to the reductase catalytic subunit MsrP, using the quinone pool of the respiratory chain. This chain is Protein-methionine-sulfoxide reductase heme-binding subunit MsrQ, found in Salmonella dublin (strain CT_02021853).